The chain runs to 978 residues: Glycine dehydrogenase (decarboxylating) (978 aa).

Lysine 726 is subject to N6-(pyridoxal phosphate)lysine.

The protein belongs to the GcvP family. The glycine cleavage system is composed of four proteins: P, T, L and H. Pyridoxal 5'-phosphate serves as cofactor.

It catalyses the reaction N(6)-[(R)-lipoyl]-L-lysyl-[glycine-cleavage complex H protein] + glycine + H(+) = N(6)-[(R)-S(8)-aminomethyldihydrolipoyl]-L-lysyl-[glycine-cleavage complex H protein] + CO2. The glycine cleavage system catalyzes the degradation of glycine. The P protein binds the alpha-amino group of glycine through its pyridoxal phosphate cofactor; CO(2) is released and the remaining methylamine moiety is then transferred to the lipoamide cofactor of the H protein. In Paraburkholderia xenovorans (strain LB400), this protein is Glycine dehydrogenase (decarboxylating).